Reading from the N-terminus, the 402-residue chain is Alanine racemase (402 aa).

Lys-34 serves as the catalytic Proton acceptor; specific for D-alanine. The residue at position 34 (Lys-34) is an N6-(pyridoxal phosphate)lysine. Residue Arg-133 participates in substrate binding. Residues 226-271 (EVSYNLSYKEKFERNTPALATTVCINKCADVNTRLTYKVPLKGSYR) enclose the RPE1 insert domain. The active-site Proton acceptor; specific for L-alanine is Tyr-296. Met-344 is a binding site for substrate.

It belongs to the alanine racemase family. It depends on pyridoxal 5'-phosphate as a cofactor.

The enzyme catalyses L-alanine = D-alanine. It participates in amino-acid biosynthesis; D-alanine biosynthesis; D-alanine from L-alanine: step 1/1. In terms of biological role, catalyzes the interconversion of L-alanine and D-alanine. May also act on other amino acids. The polypeptide is Alanine racemase (alr) (Rickettsia typhi (strain ATCC VR-144 / Wilmington)).